Here is a 143-residue protein sequence, read N- to C-terminus: Large ribosomal subunit protein uL15 (143 aa).

A disordered region spans residues 1 to 51; it reads MELNTIKPASGAKHAKRRVGRGIGSGLGKTAGRGHKGQKSRAGGYHKVGFE. The span at 21-31 shows a compositional bias: gly residues; it reads RGIGSGLGKTA.

It belongs to the universal ribosomal protein uL15 family. In terms of assembly, part of the 50S ribosomal subunit.

Its function is as follows. Binds to the 23S rRNA. This chain is Large ribosomal subunit protein uL15, found in Methylibium petroleiphilum (strain ATCC BAA-1232 / LMG 22953 / PM1).